A 451-amino-acid polypeptide reads, in one-letter code: Tubulin alpha-1 chain (451 aa).

Glutamine 11 is a GTP binding site. Position 40 is an N6-acetyllysine (lysine 40). Residues glutamate 71, glycine 144, threonine 145, threonine 179, asparagine 206, and asparagine 228 each coordinate GTP. Glutamate 71 is a binding site for Mg(2+). Residue glutamate 254 is part of the active site.

Belongs to the tubulin family. Dimer of alpha and beta chains. A typical microtubule is a hollow water-filled tube with an outer diameter of 25 nm and an inner diameter of 15 nM. Alpha-beta heterodimers associate head-to-tail to form protofilaments running lengthwise along the microtubule wall with the beta-tubulin subunit facing the microtubule plus end conferring a structural polarity. Microtubules usually have 13 protofilaments but different protofilament numbers can be found in some organisms and specialized cells. Requires Mg(2+) as cofactor. Undergoes a tyrosination/detyrosination cycle, the cyclic removal and re-addition of a C-terminal tyrosine residue by the enzymes tubulin tyrosine carboxypeptidase (TTCP) and tubulin tyrosine ligase (TTL), respectively. In terms of processing, acetylation of alpha chains at Lys-40 stabilizes microtubules and affects affinity and processivity of microtubule motors. This modification has a role in multiple cellular functions, ranging from cell motility, cell cycle progression or cell differentiation to intracellular trafficking and signaling.

Its subcellular location is the cytoplasm. The protein resides in the cytoskeleton. The enzyme catalyses GTP + H2O = GDP + phosphate + H(+). Its function is as follows. Tubulin is the major constituent of microtubules, a cylinder consisting of laterally associated linear protofilaments composed of alpha- and beta-tubulin heterodimers. Microtubules grow by the addition of GTP-tubulin dimers to the microtubule end, where a stabilizing cap forms. Below the cap, tubulin dimers are in GDP-bound state, owing to GTPase activity of alpha-tubulin. In Eleusine indica (Goosegrass), this protein is Tubulin alpha-1 chain (TUBA1).